Reading from the N-terminus, the 523-residue chain is NEDD8-activating enzyme E1 regulatory subunit AXL (523 aa).

Belongs to the ubiquitin-activating E1 family. ULA1 subfamily. As to quaternary structure, heterodimer of ECR1 and AXL1. The complex binds to RUB1/NEDD8 and RCE1.

It is found in the nucleus. It functions in the pathway protein modification; protein neddylation. Its function is as follows. Regulatory subunit of the dimeric ECR1-AXL1 E1 enzyme. E1 activates RUB1/NEDD8 by first adenylating its C-terminal glycine residue with ATP, thereafter linking this residue to the side chain of the catalytic cysteine, yielding a RUB1-ECR1 thioester and free AMP. E1 finally transfers RUB1 to the catalytic cysteine of RCE1. May function redundantly with AXR1 in the RUB conjugating pathway. Seems not to be functionally equivalent to AXR1 in vivo. The chain is NEDD8-activating enzyme E1 regulatory subunit AXL from Arabidopsis thaliana (Mouse-ear cress).